A 336-amino-acid polypeptide reads, in one-letter code: Probable G-protein coupled receptor 82 (336 aa).

Residues 1–11 lie on the Extracellular side of the membrane; that stretch reads MNNNTTCIQPS. N-linked (GlcNAc...) asparagine glycans are attached at residues Asn-3 and Asn-4. The helical transmembrane segment at 12–32 threads the bilayer; sequence MISSMALPIIYILLCIVGVFG. The Cytoplasmic segment spans residues 33–55; sequence NTLSQWIFLTKIGKKTSTHIYLS. A helical membrane pass occupies residues 56-76; that stretch reads HLVTANLLVCSAMPFMSIYFL. The Extracellular portion of the chain corresponds to 77-92; sequence KGFQWEYQSAQCRVVN. The chain crosses the membrane as a helical span at residues 93–115; it reads FLGTLSMHASMFVSLLILSWIAI. The Cytoplasmic portion of the chain corresponds to 116 to 156; the sequence is SRYATLMQKDSSQETTSCYEKIFYGHLLKKFRQPNFARKLC. Residues 157–177 form a helical membrane-spanning segment; it reads IYIWGVVLGIIIPVTVYYSVI. The Extracellular segment spans residues 178–197; sequence EATEGEESLCYNRQMELGAM. Residues 198 to 218 traverse the membrane as a helical segment; it reads ISQIAGLIGTTFIGFSFLVVL. Residues 219–251 lie on the Cytoplasmic side of the membrane; sequence TSYYSFVSHLRKIRTCTSIMEKDLTYSSVKRHL. Residues 252 to 272 traverse the membrane as a helical segment; it reads LVIQILLIVCFLPYSIFKPIF. The Extracellular portion of the chain corresponds to 273-336; it reads YVLHQRDNCQ…SNSAHMQSYG (64 aa).

It belongs to the G-protein coupled receptor 1 family.

Its subcellular location is the cell membrane. Its function is as follows. Orphan receptor. This Homo sapiens (Human) protein is Probable G-protein coupled receptor 82 (GPR82).